A 312-amino-acid chain; its full sequence is Ribosomal RNA small subunit methyltransferase H (312 aa).

S-adenosyl-L-methionine-binding positions include 38-40, Asp58, Phe84, Asp104, and Gln111; that span reads GGH.

The protein belongs to the methyltransferase superfamily. RsmH family.

It localises to the cytoplasm. It catalyses the reaction cytidine(1402) in 16S rRNA + S-adenosyl-L-methionine = N(4)-methylcytidine(1402) in 16S rRNA + S-adenosyl-L-homocysteine + H(+). In terms of biological role, specifically methylates the N4 position of cytidine in position 1402 (C1402) of 16S rRNA. The sequence is that of Ribosomal RNA small subunit methyltransferase H from Alcanivorax borkumensis (strain ATCC 700651 / DSM 11573 / NCIMB 13689 / SK2).